The primary structure comprises 219 residues: Counting factor-associated protein C (219 aa).

A signal peptide spans 1–16 (MKVLILLVSLISVCFS). Asparagine 74 and asparagine 123 each carry an N-linked (GlcNAc...) asparagine glycan.

Its subcellular location is the secreted. This chain is Counting factor-associated protein C (cfaC), found in Dictyostelium discoideum (Social amoeba).